The sequence spans 448 residues: uncharacterized protein (448 aa).

257-264 (GRNAQGKT) is an ATP binding site.

This is an uncharacterized protein from Methanocaldococcus jannaschii (strain ATCC 43067 / DSM 2661 / JAL-1 / JCM 10045 / NBRC 100440) (Methanococcus jannaschii).